The sequence spans 119 residues: uncharacterized protein (119 aa).

The chain crosses the membrane as a helical span at residues L30–L50.

Its subcellular location is the membrane. This is an uncharacterized protein from Saccharomyces cerevisiae (strain ATCC 204508 / S288c) (Baker's yeast).